The sequence spans 571 residues: Potassium-transporting ATPase potassium-binding subunit (571 aa).

12 helical membrane-spanning segments follow: residues 5–25 (GWMQIALYGAVVLALVRPLGG), 64–84 (LAYAGAMILFNVAGFVLLYAL), 136–156 (GLTHQNFVSAASGMAVAVALI), 179–199 (LYVLLPLSTVLALFYVSQGMP), 220–240 (VGPVASQVAIKMLGTNGGGFF), 254–274 (LSNFLQMLSIFVIGAALTNVF), 285–305 (WAILAAMGLLFLAGVTVTYWA), 330–350 (FGIAASALFAVITTAASCGAV), 375–395 (IIGGVGAGLYGMLVFVVVAIF), 421–441 (MLGILCLPLMMLGFTAIATVV), 488–508 (LAIGMLVGRFFVKIPVLAIAG), and 527–547 (GGLFVGLLVGVVLIIGGLTFF).

It belongs to the KdpA family. As to quaternary structure, the system is composed of three essential subunits: KdpA, KdpB and KdpC.

It is found in the cell inner membrane. In terms of biological role, part of the high-affinity ATP-driven potassium transport (or Kdp) system, which catalyzes the hydrolysis of ATP coupled with the electrogenic transport of potassium into the cytoplasm. This subunit binds the periplasmic potassium ions and delivers the ions to the membrane domain of KdpB through an intramembrane tunnel. In Methylorubrum extorquens (strain CM4 / NCIMB 13688) (Methylobacterium extorquens), this protein is Potassium-transporting ATPase potassium-binding subunit.